The sequence spans 330 residues: Polyprenal reductase (330 aa).

At 1 to 16 (MAGWAGAELSVLNPLR) the chain is on the cytoplasmic side. Residues 17–37 (ALWLLLAAAFLLALLLQLAPA) traverse the membrane as a helical segment. The Lumenal segment spans residues 38–89 (RLLPSCALFQDLIRYGKTKQSGSRRPAVCRAFDVPKRYFSHFYVVSVLWNGS). The chain crosses the membrane as a helical span at residues 90–110 (LLWFLSQSLFLGAPFPSWLWA). Residues 111-136 (LLRTLGVTQFQALGMESKASRIQGKK) are Cytoplasmic-facing. The helical transmembrane segment at 137–157 (LALSTFLVLVFLWVHSLRRLF) threads the bilayer. At 158-169 (ECFYVSVFSNTA) the chain is on the lumenal side. The chain crosses the membrane as a helical span at residues 170–190 (IHVVQYCFGLVYYVLVGLTVL). The Cytoplasmic segment spans residues 191 to 206 (SQVPMNDKNVYALGKN). The chain crosses the membrane as a helical span at residues 207–227 (LLLQARWFHILGMMMFFWSSA). Over 228-277 (HQYKCHVILSNLRRNKKGVVIHCQHRIPFGDWFEYVSSANYLAELMIYIS) the chain is Lumenal. A helical transmembrane segment spans residues 278 to 298 (MAVTFGLHNVTWWLVVTYVFF). The Cytoplasmic portion of the chain corresponds to 299–330 (SQALSAFFNHRFYKSTFVSYPKHRKAFLPFLF).

The protein belongs to the steroid 5-alpha reductase family. Polyprenal reductase subfamily. As to expression, expressed in the 2 tissues tested i.e. testis and liver.

The protein localises to the endoplasmic reticulum membrane. The enzyme catalyses a di-trans,poly-cis-dolichal + NADP(+) = a di-trans,poly-cis-polyprenal + NADPH + H(+). It carries out the reaction a 3-oxo-5alpha-steroid + NADP(+) = a 3-oxo-Delta(4)-steroid + NADPH + H(+). It catalyses the reaction androst-4-ene-3,17-dione + NADPH + H(+) = 5alpha-androstan-3,17-dione + NADP(+). The catalysed reaction is 17beta-hydroxy-5alpha-androstan-3-one + NADP(+) = testosterone + NADPH + H(+). It functions in the pathway protein modification; protein glycosylation. Its function is as follows. Plays a key role in early steps of protein N-linked glycosylation by being involved in the conversion of polyprenol into dolichol. Acts as a polyprenal reductase that mediates the reduction of polyprenal into dolichal in a NADP-dependent mechanism. Dolichols are required for the synthesis of dolichol-linked monosaccharides and the oligosaccharide precursor used for N-glycosylation. Also able to convert testosterone (T) into 5-alpha-dihydrotestosterone (DHT). The polypeptide is Polyprenal reductase (Rattus norvegicus (Rat)).